The primary structure comprises 650 residues: DNA ligase (650 aa).

Residues 30 to 34 and 79 to 80 contribute to the NAD(+) site; these read DEQYD and SL. The active-site N6-AMP-lysine intermediate is K110. The NAD(+) site is built by R131, E165, and K304. The Zn(2+) site is built by C398, C401, C414, and C419. Positions 573–650 constitute a BRCT domain; the sequence is DNNNVFFNKT…EEEFLAQINK (78 aa).

Belongs to the NAD-dependent DNA ligase family. LigA subfamily. It depends on Mg(2+) as a cofactor. Requires Mn(2+) as cofactor.

The catalysed reaction is NAD(+) + (deoxyribonucleotide)n-3'-hydroxyl + 5'-phospho-(deoxyribonucleotide)m = (deoxyribonucleotide)n+m + AMP + beta-nicotinamide D-nucleotide.. Functionally, DNA ligase that catalyzes the formation of phosphodiester linkages between 5'-phosphoryl and 3'-hydroxyl groups in double-stranded DNA using NAD as a coenzyme and as the energy source for the reaction. It is essential for DNA replication and repair of damaged DNA. The chain is DNA ligase from Helicobacter hepaticus (strain ATCC 51449 / 3B1).